A 209-amino-acid polypeptide reads, in one-letter code: Response regulator protein VraR (209 aa).

The Response regulatory domain occupies Lys-4–Ser-120. A 4-aspartylphosphate modification is found at Asp-55. Residues Arg-141–Asn-206 form the HTH luxR-type domain. Residues Asn-165 to Ser-184 constitute a DNA-binding region (H-T-H motif).

As to quaternary structure, homodimer. In terms of processing, phosphorylated by VraS. Phosphorylation state of VraR controls dimerization of the protein.

The protein localises to the cytoplasm. Functionally, member of the two-component regulatory system VraS/VraR involved in the control of the cell wall peptidoglycan biosynthesis. Upon cellular stress, the histidine kinase VraS transfers the phosphoryl group onto VraR. Upon phosphorylation, VraR dimerizes at the N-terminal domain. In turn, phosphorylation-induced dimerization expands and enhances the VraR binding to its own promoter leading to increased expression and subsequent modulation of as many as 40 genes, which ultimately constitute the S.aureus response to cell wall damage. In addition, inhibits the host autophagic flux and delays the early stage of autophagosome formation, thereby promoting bacterial survival. Facilitates the ability of S.aureus to resist host polymorphonuclear leukocytes-mediated phagocytosis and killing thus contributing to immune evasion. This Staphylococcus aureus (strain Mu3 / ATCC 700698) protein is Response regulator protein VraR (vraR).